The sequence spans 285 residues: Shikimate dehydrogenase (NADP(+)) (285 aa).

Residues 19 to 21 and threonine 66 contribute to the shikimate site; that span reads SLS. Residue lysine 70 is the Proton acceptor of the active site. 2 residues coordinate shikimate: asparagine 91 and aspartate 107. Residues 129 to 133 and leucine 228 contribute to the NADP(+) site; that span reads GSGGA. Tyrosine 230 lines the shikimate pocket. An NADP(+)-binding site is contributed by glycine 251.

The protein belongs to the shikimate dehydrogenase family. Homodimer.

The enzyme catalyses shikimate + NADP(+) = 3-dehydroshikimate + NADPH + H(+). It participates in metabolic intermediate biosynthesis; chorismate biosynthesis; chorismate from D-erythrose 4-phosphate and phosphoenolpyruvate: step 4/7. In terms of biological role, involved in the biosynthesis of the chorismate, which leads to the biosynthesis of aromatic amino acids. Catalyzes the reversible NADPH linked reduction of 3-dehydroshikimate (DHSA) to yield shikimate (SA). This is Shikimate dehydrogenase (NADP(+)) from Prochlorococcus marinus (strain MIT 9515).